We begin with the raw amino-acid sequence, 316 residues long: Phosphoribosylaminoimidazole-succinocarboxamide synthase (316 aa).

This sequence belongs to the SAICAR synthetase family.

The catalysed reaction is 5-amino-1-(5-phospho-D-ribosyl)imidazole-4-carboxylate + L-aspartate + ATP = (2S)-2-[5-amino-1-(5-phospho-beta-D-ribosyl)imidazole-4-carboxamido]succinate + ADP + phosphate + 2 H(+). The protein operates within purine metabolism; IMP biosynthesis via de novo pathway; 5-amino-1-(5-phospho-D-ribosyl)imidazole-4-carboxamide from 5-amino-1-(5-phospho-D-ribosyl)imidazole-4-carboxylate: step 1/2. The sequence is that of Phosphoribosylaminoimidazole-succinocarboxamide synthase from Flavobacterium psychrophilum (strain ATCC 49511 / DSM 21280 / CIP 103535 / JIP02/86).